Consider the following 199-residue polypeptide: MKIGDVEVRDDVFNVKVKKHVLWEVVKWQLAKRRQGTHSTKTRGEVAYSGRKILPQKGTGNARHGERGVNIFVGGGVAHGPKPRDYEYPLPKKVRKLGLKMALSDKAQNDAIMFVDNIDLGEQPKTKKAVEFLKNLGVDKETLLIVIPEKNEVLYKSFRNLQNVRVLLPEGLNVYDVLWANKLVIHKECLDRIYKKVEA.

The protein belongs to the universal ribosomal protein uL4 family. In terms of assembly, part of the 50S ribosomal subunit.

Functionally, one of the primary rRNA binding proteins, this protein initially binds near the 5'-end of the 23S rRNA. It is important during the early stages of 50S assembly. It makes multiple contacts with different domains of the 23S rRNA in the assembled 50S subunit and ribosome. In terms of biological role, forms part of the polypeptide exit tunnel. This is Large ribosomal subunit protein uL4 from Aquifex pyrophilus.